The primary structure comprises 67 residues: DNA-directed RNA polymerase subunit omega (67 aa).

It belongs to the RNA polymerase subunit omega family. As to quaternary structure, the RNAP catalytic core consists of 2 alpha, 1 beta, 1 beta' and 1 omega subunit. When a sigma factor is associated with the core the holoenzyme is formed, which can initiate transcription.

The enzyme catalyses RNA(n) + a ribonucleoside 5'-triphosphate = RNA(n+1) + diphosphate. In terms of biological role, promotes RNA polymerase assembly. Latches the N- and C-terminal regions of the beta' subunit thereby facilitating its interaction with the beta and alpha subunits. The sequence is that of DNA-directed RNA polymerase subunit omega from Polynucleobacter asymbioticus (strain DSM 18221 / CIP 109841 / QLW-P1DMWA-1) (Polynucleobacter necessarius subsp. asymbioticus).